A 253-amino-acid polypeptide reads, in one-letter code: Adenosylcobinamide-GDP ribazoletransferase (253 aa).

4 helical membrane passes run 33–53 (ISPI…YLIL), 106–126 (VGSG…VALL), 132–152 (LYTI…SLYI), and 178–198 (ILLL…FIIF).

The protein belongs to the CobS family. The cofactor is Mg(2+).

It localises to the cell membrane. It catalyses the reaction alpha-ribazole + adenosylcob(III)inamide-GDP = adenosylcob(III)alamin + GMP + H(+). It carries out the reaction alpha-ribazole 5'-phosphate + adenosylcob(III)inamide-GDP = adenosylcob(III)alamin 5'-phosphate + GMP + H(+). Its pathway is cofactor biosynthesis; adenosylcobalamin biosynthesis; adenosylcobalamin from cob(II)yrinate a,c-diamide: step 7/7. Joins adenosylcobinamide-GDP and alpha-ribazole to generate adenosylcobalamin (Ado-cobalamin). Also synthesizes adenosylcobalamin 5'-phosphate from adenosylcobinamide-GDP and alpha-ribazole 5'-phosphate. The sequence is that of Adenosylcobinamide-GDP ribazoletransferase from Saccharolobus solfataricus (strain ATCC 35092 / DSM 1617 / JCM 11322 / P2) (Sulfolobus solfataricus).